Here is a 443-residue protein sequence, read N- to C-terminus: Trigger factor (443 aa).

The PPIase FKBP-type domain occupies 161-246; the sequence is ADGVTITYHG…VISVTAPRLP (86 aa).

The protein belongs to the FKBP-type PPIase family. Tig subfamily.

Its subcellular location is the cytoplasm. It carries out the reaction [protein]-peptidylproline (omega=180) = [protein]-peptidylproline (omega=0). Involved in protein export. Acts as a chaperone by maintaining the newly synthesized protein in an open conformation. Functions as a peptidyl-prolyl cis-trans isomerase. This chain is Trigger factor, found in Nitrosococcus oceani (strain ATCC 19707 / BCRC 17464 / JCM 30415 / NCIMB 11848 / C-107).